The following is a 766-amino-acid chain: Phospholipid phosphatase-related protein type 4 (766 aa).

The residue at position 37 (S37) is a Phosphoserine. A run of 4 helical transmembrane segments spans residues 68–88 (LPCFYFVELPILASSVVSLYF), 120–140 (AIPFLMLLSLAFAGPAITIMV), 179–199 (FVGVHVVGLCSTALITDIIQL), and 248–268 (SFPSQHATLAAFAAVYVSMYF). Residue N269 is glycosylated (N-linked (GlcNAc...) asparagine). The next 2 membrane-spanning stretches (helical) occupy residues 277-297 (KLLKPLLVFTFIICGIICGLT) and 309-329 (VYCGFLIGGGIALYLGLYAVG). S347 is subject to Phosphoserine. N-linked (GlcNAc...) asparagine glycosylation occurs at N363. A Phosphoserine modification is found at S386. Residue N433 is glycosylated (N-linked (GlcNAc...) asparagine). A Phosphoserine modification is found at S439. Disordered stretches follow at residues 454–503 (SKNE…GNQY) and 510–529 (TVPGCNNSMPAGPRVSIQSR). N456 is a glycosylation site (N-linked (GlcNAc...) asparagine). 2 positions are modified to phosphoserine: S462 and S474. 2 N-linked (GlcNAc...) asparagine glycosylation sites follow: N515 and N545. At S608 the chain carries Phosphoserine. Disordered regions lie at residues 634-654 (PIIQIPSSTEGEGSGSWKWKA), 672-705 (DSESCESLKDSFGSGDRKRKHIDSNEHHHHGITT), and 741-766 (PERSNSPENTRNIFYKGTSPTRPYKD). The segment covering 688–702 (RKRKHIDSNEHHHHG) has biased composition (basic residues). Residues 743–752 (RSNSPENTRN) are compositionally biased toward polar residues.

It belongs to the PA-phosphatase related phosphoesterase family. Post-translationally, O-glycosylated. Probably at Ser-347. Specifically expressed in neurons (at protein level).

The protein resides in the postsynaptic density membrane. In terms of biological role, postsynaptic density membrane protein that indirectly regulates glutamatergic synaptic transmission through lysophosphatidic acid (LPA)-mediated signaling pathways. Binds lysophosphatidic acid (LPA) and mediates its internalization into cells. Could act as receptor or a transporter of this lipid at the post-synaptic membrane. Modulates lysophosphatidic acid (LPA) activity in neuron axonal outgrowth during development by attenuating phospholipid-induced axon collapse. In Rattus norvegicus (Rat), this protein is Phospholipid phosphatase-related protein type 4.